Reading from the N-terminus, the 57-residue chain is DNA-directed RNA polymerase subunit Rpo6 (57 aa).

This sequence belongs to the archaeal Rpo6/eukaryotic RPB6 RNA polymerase subunit family. Part of the RNA polymerase complex.

It localises to the cytoplasm. It carries out the reaction RNA(n) + a ribonucleoside 5'-triphosphate = RNA(n+1) + diphosphate. Its function is as follows. DNA-dependent RNA polymerase (RNAP) catalyzes the transcription of DNA into RNA using the four ribonucleoside triphosphates as substrates. This chain is DNA-directed RNA polymerase subunit Rpo6, found in Haloarcula marismortui (strain ATCC 43049 / DSM 3752 / JCM 8966 / VKM B-1809) (Halobacterium marismortui).